The primary structure comprises 586 residues: Arrestin-related trafficking adapter 5 (586 aa).

Disordered stretches follow at residues 123-145 and 182-217; these read GENA…DMDT and ENGV…YSNR. A compositionally biased stretch (polar residues) spans 126–145; the sequence is AENQHNSSSGRSTSNQDMDT. Residues 199–216 show a composition bias toward low complexity; the sequence is SRSSSSNTLNNNSHSYSN. Lysine 364 participates in a covalent cross-link: Glycyl lysine isopeptide (Lys-Gly) (interchain with G-Cter in ubiquitin).

Belongs to the arrestin family. Interacts with RSP5. In terms of processing, ubiquitinated by RSP5.

Its function is as follows. May regulate endocytosis by recruiting RSP5 ubiquitin ligase activity to specific plasma membrane proteins in response to extracellular stimuli. The sequence is that of Arrestin-related trafficking adapter 5 (ART5) from Saccharomyces cerevisiae (strain ATCC 204508 / S288c) (Baker's yeast).